We begin with the raw amino-acid sequence, 126 residues long: uncharacterized protein (126 aa).

Residues 1-46 are disordered; that stretch reads MREEEAAAVVTVPQAGRDGEQPGPPAGLGCAAVRGEPGGGGPQESR.

It localises to the cytoplasm. The protein localises to the cytoskeleton. Its subcellular location is the cilium basal body. This is an uncharacterized protein from Bos taurus (Bovine).